The chain runs to 1173 residues: Alpha-mannosidase 2 (1173 aa).

The tract at residues 1–21 (MPFSSYIGNSRRSSTGGGTGG) is disordered. Residues 1-50 (MPFSSYIGNSRRSSTGGGTGGWGQSLLPTALSKSKLAINRKPRKRTLVVN) lie on the Cytoplasmic side of the membrane. A helical; Signal-anchor transmembrane segment spans residues 51–71 (FIFANFFVIALTVSLLFFLLT). At 72–1173 (LFHFGVPGPI…AYKLELRPHK (1102 aa)) the chain is on the lumenal side. A glycan (N-linked (GlcNAc...) asparagine) is linked at Asn-106. 2 residues coordinate Zn(2+): His-162 and Asp-164. A glycan (N-linked (GlcNAc...) asparagine) is linked at Asn-262. Residue Asp-276 coordinates Zn(2+). Asp-276 (nucleophile) is an active-site residue. Residue Asn-467 is glycosylated (N-linked (GlcNAc...) asparagine). His-564 contacts Zn(2+). 6 N-linked (GlcNAc...) asparagine glycosylation sites follow: Asn-675, Asn-772, Asn-782, Asn-991, Asn-1098, and Asn-1108.

This sequence belongs to the glycosyl hydrolase 38 family. Homodimer; disulfide-linked. Interacts with GALT1. Zn(2+) serves as cofactor. In terms of processing, glycosylated.

Its subcellular location is the golgi apparatus membrane. It carries out the reaction N(4)-{beta-D-GlcNAc-(1-&gt;2)-alpha-D-Man-(1-&gt;3)-[alpha-D-Man-(1-&gt;3)-[alpha-D-Man-(1-&gt;6)]-alpha-D-Man-(1-&gt;6)]-beta-D-Man-(1-&gt;4)-beta-D-GlcNAc-(1-&gt;4)-beta-D-GlcNAc}-L-asparaginyl-[protein] + 2 H2O = 2 alpha-D-mannopyranose + an N(4)-{beta-D-GlcNAc-(1-&gt;2)-alpha-D-Man-(1-&gt;3)-[alpha-D-Man-(1-&gt;6)]-beta-D-Man-(1-&gt;4)-beta-D-GlcNAc-(1-&gt;4)-beta-D-GlcNAc}-L-asparaginyl-[protein]. The protein operates within protein modification; protein glycosylation. Inhibited by 1 mM Cu(2+) and by the class II alpha-mannosidase inhibitor swainsonine. Its function is as follows. Catalyzes the first committed step in the biosynthesis of complex N-glycans. It controls conversion of high mannose to complex N-glycans; the final hydrolytic step in the N-glycan maturation pathway. Converts GlcNAcMan(5)GlcNAc(2) (Man5Gn) into GlcNAcMan(3)GlcNAc(2) (MGn) by sequential removal of two alpha1,6- and alpha1,3-linked mannose residues from the alpha1,6-mannose branch of the substrate. To a lesser extent, also able to cleave beta1,2-xylosylated Man5Gn-glycopeptide (Man5GnX-GP) and pyridylaminated substrates Man5Gn-PA and Man5GnX-PA, but not active toward Man5-glycopeptide. Required for resistance to salt stress. The polypeptide is Alpha-mannosidase 2 (Arabidopsis thaliana (Mouse-ear cress)).